The chain runs to 199 residues: Phosphoheptose isomerase (199 aa).

Residues 36 to 198 (MSQCLLNEHK…DRKLIPSSED (163 aa)) form the SIS domain. Residue 51 to 53 (NGG) participates in substrate binding. 2 residues coordinate Zn(2+): His-60 and Glu-64. Residues Glu-64, 93 to 94 (ND), 119 to 121 (STS), Ser-124, and Gln-174 each bind substrate. Residues Gln-174 and His-182 each coordinate Zn(2+).

Belongs to the SIS family. GmhA subfamily. As to quaternary structure, homotetramer. Zn(2+) serves as cofactor.

It localises to the cytoplasm. It carries out the reaction 2 D-sedoheptulose 7-phosphate = D-glycero-alpha-D-manno-heptose 7-phosphate + D-glycero-beta-D-manno-heptose 7-phosphate. It functions in the pathway carbohydrate biosynthesis; D-glycero-D-manno-heptose 7-phosphate biosynthesis; D-glycero-alpha-D-manno-heptose 7-phosphate and D-glycero-beta-D-manno-heptose 7-phosphate from sedoheptulose 7-phosphate: step 1/1. In terms of biological role, catalyzes the isomerization of sedoheptulose 7-phosphate in D-glycero-D-manno-heptose 7-phosphate. The sequence is that of Phosphoheptose isomerase from Coxiella burnetii (strain RSA 331 / Henzerling II).